The primary structure comprises 470 residues: Ribulose bisphosphate carboxylase large chain (470 aa).

Substrate is bound by residues Asn115 and Thr165. The active-site Proton acceptor is the Lys167. Residue Lys169 coordinates substrate. 3 residues coordinate Mg(2+): Lys193, Asp195, and Glu196. Position 193 is an N6-carboxylysine (Lys193). The active-site Proton acceptor is His286. Substrate contacts are provided by Arg287, His319, and Ser371.

Belongs to the RuBisCO large chain family. Type I subfamily. In terms of assembly, heterohexadecamer of 8 large chains and 8 small chains. Requires Mg(2+) as cofactor.

The protein resides in the carboxysome. It catalyses the reaction 2 (2R)-3-phosphoglycerate + 2 H(+) = D-ribulose 1,5-bisphosphate + CO2 + H2O. The enzyme catalyses D-ribulose 1,5-bisphosphate + O2 = 2-phosphoglycolate + (2R)-3-phosphoglycerate + 2 H(+). Functionally, ruBisCO catalyzes two reactions: the carboxylation of D-ribulose 1,5-bisphosphate, the primary event in carbon dioxide fixation, as well as the oxidative fragmentation of the pentose substrate in the photorespiration process. Both reactions occur simultaneously and in competition at the same active site. This Prochlorococcus marinus (strain SARG / CCMP1375 / SS120) protein is Ribulose bisphosphate carboxylase large chain.